The following is a 420-amino-acid chain: F420-non-reducing hydrogenase vhu subunit A (420 aa).

Residues Cys-61 and Cys-64 each contribute to the Ni(2+) site.

It belongs to the [NiFe]/[NiFeSe] hydrogenase large subunit family. In terms of assembly, the F420-non-reducing hydrogenase vhu is composed of four subunits; VhuA, VhuD, VhuG and VhuU. Ni(2+) is required as a cofactor.

This chain is F420-non-reducing hydrogenase vhu subunit A (vhuA), found in Methanococcus voltae.